An 867-amino-acid polypeptide reads, in one-letter code: Leucine--tRNA ligase (867 aa).

A 'HIGH' region motif is present at residues 42–52 (PYPSGKLHMGH). The 'KMSKS' region motif lies at 631–635 (KMSKS). Lys634 serves as a coordination point for ATP.

Belongs to the class-I aminoacyl-tRNA synthetase family.

It is found in the cytoplasm. It catalyses the reaction tRNA(Leu) + L-leucine + ATP = L-leucyl-tRNA(Leu) + AMP + diphosphate. This chain is Leucine--tRNA ligase, found in Dichelobacter nodosus (strain VCS1703A).